We begin with the raw amino-acid sequence, 139 residues long: Non-structural protein 1 (139 aa).

The DLNP; interaction with MAP1B signature appears at 136–139; sequence DLNP.

Belongs to the pneumovirus non-structural protein 1 family. In terms of assembly, monomer. Homomultimer. Heteromultimer with NS2. Interacts with the matrix protein M. Interacts with host ELOC and CUL2; this interaction allows NS1 to form an active E3 ligase with ELOC and CUL2. Interacts with host IRF3; this interaction leads to the disrupted association of IRF3 with CREBBP and thus reduced binding of IRF3 to the IFN-beta promoter. Interacts with host MAVS; this interaction prevents MAVS binding to RIGI and inhibits signaling pathway leading to interferon production. Interacts with host MAP1B/microtubule-associated protein 1B. Interacts with host TRIM25 (via SPRY domain); this interaction suppresses RIGI ubiquitination and results in decreased interaction between RIGI and MAVS.

The protein resides in the host cytoplasm. It is found in the host mitochondrion. The protein localises to the host nucleus. Plays a major role in antagonizing the type I IFN-mediated antiviral response by degrading or inhibiting multiple cellular factors required for either IFN induction or response pathways. Acts cooperatively with NS2 to repress activation and nuclear translocation of host IFN-regulatory factor IRF3. Also disrupts the association of IRF3 with CREBBP. Interacts with host mitochondrial-associated membrane (MAM) MAVS and prevents the interaction with RIGI. Interacts with TRIM25 to suppress TRIM25-mediated RIGI ubiquitination and thereby RIGI-MAVS interaction. Together with NS2, participates in the proteasomal degradation of host STAT2, IRF3, IRF7, TBK1 and RIGI through a NS-degradasome involving CUL2 and Elongin-C. The degradasome requires an intact mitochondrial MAVS. Decreases the levels of host TRAF3 and IKBKE/IKK-epsilon. As functions other than disruptions of the type I IFN-mediated antiviral signaling pathways, induces host SOCS1 and SOCS3 expression. Suppresses premature apoptosis by an NF-kappa-B-dependent, interferon-independent mechanism and thus facilitates virus growth. Additionally, NS1 may serve some inhibitory role in viral transcription and RNA replication. Suppresses proliferation and activation of host CD103+ CD8+ cytotoxic T-lymphocytes and Th17 helper T-lymphocytes. This Homo sapiens (Human) protein is Non-structural protein 1 (1C).